The chain runs to 128 residues: 3-aminoacrylate deaminase RutC (128 aa).

This sequence belongs to the RutC family. As to quaternary structure, homotrimer.

The enzyme catalyses (Z)-3-aminoacrylate + H2O + H(+) = 3-oxopropanoate + NH4(+). Its function is as follows. Involved in pyrimidine catabolism. Catalyzes the deamination of 3-aminoacrylate to malonic semialdehyde, a reaction that can also occur spontaneously. RutC may facilitate the reaction and modulate the metabolic fitness, rather than catalyzing essential functions. This chain is 3-aminoacrylate deaminase RutC, found in Escherichia coli O103:H2 (strain 12009 / EHEC).